The chain runs to 368 residues: DNA-directed RNA polymerase subunit alpha (368 aa).

The segment at 1–231 (MLWKGFQKPK…DHMNIFINFE (231 aa)) is alpha N-terminal domain (alpha-NTD). Residues 243 to 368 (KPEIRNENLN…GFGGDNNPGF (126 aa)) are alpha C-terminal domain (alpha-CTD).

Belongs to the RNA polymerase alpha chain family. As to quaternary structure, homodimer. The RNAP catalytic core consists of 2 alpha, 1 beta, 1 beta' and 1 omega subunit. When a sigma factor is associated with the core the holoenzyme is formed, which can initiate transcription.

It carries out the reaction RNA(n) + a ribonucleoside 5'-triphosphate = RNA(n+1) + diphosphate. In terms of biological role, DNA-dependent RNA polymerase catalyzes the transcription of DNA into RNA using the four ribonucleoside triphosphates as substrates. This chain is DNA-directed RNA polymerase subunit alpha, found in Koribacter versatilis (strain Ellin345).